The sequence spans 250 residues: NAD-dependent protein deacylase (250 aa).

A Deacetylase sirtuin-type domain is found at Met-1 to Ile-248. NAD(+) is bound at residue Gly-20–Trp-39. 2 residues coordinate substrate: Tyr-64 and Arg-67. Residue Gln-98–Asp-101 participates in NAD(+) binding. Catalysis depends on His-116, which acts as the Proton acceptor. Residues Cys-124, Cys-127, Cys-150, and Cys-153 each contribute to the Zn(2+) site. Residues Gly-190–Ser-192, Asn-216–Glu-218, and Ala-234 contribute to the NAD(+) site.

It belongs to the sirtuin family. Class III subfamily. The cofactor is Zn(2+).

The protein resides in the cytoplasm. It catalyses the reaction N(6)-acetyl-L-lysyl-[protein] + NAD(+) + H2O = 2''-O-acetyl-ADP-D-ribose + nicotinamide + L-lysyl-[protein]. The enzyme catalyses N(6)-succinyl-L-lysyl-[protein] + NAD(+) + H2O = 2''-O-succinyl-ADP-D-ribose + nicotinamide + L-lysyl-[protein]. NAD-dependent lysine deacetylase and desuccinylase that specifically removes acetyl and succinyl groups on target proteins. Modulates the activities of several proteins which are inactive in their acylated form. Deacetylates the N-terminal lysine residue of Alba, the major archaeal chromatin protein and that, in turn, increases Alba's DNA binding affinity, thereby repressing transcription. This chain is NAD-dependent protein deacylase, found in Pyrococcus furiosus (strain ATCC 43587 / DSM 3638 / JCM 8422 / Vc1).